Here is a 290-residue protein sequence, read N- to C-terminus: GTPase Era (290 aa).

The Era-type G domain maps to 2-169; sequence KSGFVSIIGR…KDKIYENLQE (168 aa). The tract at residues 10 to 17 is G1; sequence GRPSTGKS. Position 10 to 17 (10 to 17) interacts with GTP; that stretch reads GRPSTGKS. A G2 region spans residues 36-40; sequence QTTRN. Residues 57-60 are G3; it reads DTPG. GTP-binding positions include 57 to 61 and 119 to 122; these read DTPGF and NKID. Residues 119–122 form a G4 region; the sequence is NKID. The segment at 148–150 is G5; sequence ISA. The KH type-2 domain maps to 200 to 276; the sequence is LKEELPYSLY…DLFLQVKLRK (77 aa).

It belongs to the TRAFAC class TrmE-Era-EngA-EngB-Septin-like GTPase superfamily. Era GTPase family. In terms of assembly, monomer.

The protein localises to the cytoplasm. It is found in the cell inner membrane. Functionally, an essential GTPase that binds both GDP and GTP, with rapid nucleotide exchange. Plays a role in 16S rRNA processing and 30S ribosomal subunit biogenesis and possibly also in cell cycle regulation and energy metabolism. The protein is GTPase Era of Borrelia turicatae (strain 91E135).